The sequence spans 437 residues: Magnetosome protein MamN (437 aa).

Helical transmembrane passes span 26–46 (LAVL…GSYT), 53–73 (SVYF…ALLA), 95–115 (WILV…NSLV), 136–156 (VPVI…TMIG), 174–194 (FIAG…VFFE), 226–246 (LLSY…LAGP), 252–268 (GWIA…LGRF), 281–301 (DILF…VGIL), 320–340 (AILL…GTSA), 358–378 (AAWW…LPGA), and 416–436 (WGMP…AVLV).

This sequence belongs to the arsenite-antimonite (ArsB) efflux (TC 2.A.45) family.

Its subcellular location is the magnetosome membrane. In terms of biological role, plays a role in biomineralization; might regulate pH in the magnetosome. In Paramagnetospirillum magneticum (strain ATCC 700264 / AMB-1) (Magnetospirillum magneticum), this protein is Magnetosome protein MamN (mamN).